The chain runs to 118 residues: Putative pterin-4-alpha-carbinolamine dehydratase (118 aa).

Belongs to the pterin-4-alpha-carbinolamine dehydratase family.

It carries out the reaction (4aS,6R)-4a-hydroxy-L-erythro-5,6,7,8-tetrahydrobiopterin = (6R)-L-erythro-6,7-dihydrobiopterin + H2O. The sequence is that of Putative pterin-4-alpha-carbinolamine dehydratase from Pseudomonas fluorescens (strain SBW25).